Consider the following 261-residue polypeptide: 3-hydroxyacyl-CoA dehydrogenase type-2 (261 aa).

Residue Ala-2 is modified to N-acetylalanine. 2 residues coordinate NAD(+): Ser-20 and Asp-41. Lys-53 bears the N6-acetyllysine; alternate mark. The residue at position 53 (Lys-53) is an N6-succinyllysine; alternate. NAD(+) is bound at residue Val-65. Residue Lys-69 is modified to N6-acetyllysine. Cys-91 contacts NAD(+). 2 positions are modified to N6-acetyllysine: Lys-99 and Lys-105. Lys-107 carries the N6-acetyllysine; alternate modification. Lys-107 bears the N6-succinyllysine; alternate mark. Ser-155 serves as a coordination point for substrate. NAD(+) contacts are provided by Tyr-168, Lys-172, Phe-201, and Thr-203. Catalysis depends on Tyr-168, which acts as the Proton acceptor. Lys-212 carries the N6-acetyllysine; alternate modification. Position 212 is an N6-succinyllysine; alternate (Lys-212).

It belongs to the short-chain dehydrogenases/reductases (SDR) family. Homotetramer. Component of mitochondrial ribonuclease P, a complex composed of TRMT10C/MRPP1, HSD17B10/MRPP2 and PRORP/MRPP3. Interacts with TRMT10C/MRPP1; forming the MRPP1-MRPP2 subcomplex of the mitochondrial ribonuclease P complex.

It is found in the mitochondrion. Its subcellular location is the mitochondrion matrix. The protein localises to the mitochondrion nucleoid. It catalyses the reaction a (3S)-3-hydroxyacyl-CoA + NAD(+) = a 3-oxoacyl-CoA + NADH + H(+). The enzyme catalyses (2S,3S)-3-hydroxy-2-methylbutanoyl-CoA + NAD(+) = 2-methyl-3-oxobutanoyl-CoA + NADH + H(+). It carries out the reaction testosterone + NAD(+) = androst-4-ene-3,17-dione + NADH + H(+). The catalysed reaction is 5alpha-androstane-3alpha,17beta-diol + NAD(+) = 17beta-hydroxy-5alpha-androstan-3-one + NADH + H(+). It catalyses the reaction 17beta-estradiol + NAD(+) = estrone + NADH + H(+). The enzyme catalyses cholate + NAD(+) = 3alpha,12alpha-dihydroxy-7-oxo-5beta-cholanate + NADH + H(+). It carries out the reaction (3S)-3-hydroxybutanoyl-CoA + NAD(+) = acetoacetyl-CoA + NADH + H(+). The catalysed reaction is (3S)-hydroxyoctanoyl-CoA + NAD(+) = 3-oxooctanoyl-CoA + NADH + H(+). It catalyses the reaction (3S)-hydroxyhexadecanoyl-CoA + NAD(+) = 3-oxohexadecanoyl-CoA + NADH + H(+). The enzyme catalyses 17beta-hydroxy-5alpha-androstan-3-one + NAD(+) = 5alpha-androstan-3,17-dione + NADH + H(+). It carries out the reaction 5alpha-pregnan-20beta-ol-3-one + NAD(+) = 5alpha-pregnane-3,20-dione + NADH + H(+). The catalysed reaction is 3alpha-hydroxy-5alpha-pregnan-20-one + NAD(+) = 5alpha-pregnane-3,20-dione + NADH + H(+). It catalyses the reaction cortisone + NAD(+) = 17alpha-hydroxypregn-4-en-3,11,20-trione-21-al + NADH + H(+). The enzyme catalyses 11-dehydrocorticosterone + NAD(+) = pregn-4-ene-3,11,20,21-tetraone + NADH + H(+). It carries out the reaction cortisol + NAD(+) = 11beta,17alpha-dihydroxypregn-4-ene-3,20,21-trione + NADH + H(+). The catalysed reaction is chenodeoxycholate + NAD(+) = 7-oxolithocholate + NADH + H(+). It catalyses the reaction ursodeoxycholate + NAD(+) = 7-oxolithocholate + NADH + H(+). The enzyme catalyses 3beta,7beta-dihydroxy-5beta-cholan-24-oate + NAD(+) = 3beta-hydroxy-7-oxo-5beta-cholan-24-oate + NADH + H(+). The protein operates within amino-acid degradation; L-isoleucine degradation. Its pathway is lipid metabolism; fatty acid beta-oxidation. It participates in steroid metabolism. It functions in the pathway lipid metabolism; bile acid biosynthesis. Functionally, mitochondrial dehydrogenase involved in pathways of fatty acid, branched-chain amino acid and steroid metabolism. Acts as (S)-3-hydroxyacyl-CoA dehydrogenase in mitochondrial fatty acid beta-oxidation, a major degradation pathway of fatty acids. Catalyzes the third step in the beta-oxidation cycle, namely the reversible conversion of (S)-3-hydroxyacyl-CoA to 3-ketoacyl-CoA. Preferentially accepts straight medium- and short-chain acyl-CoA substrates with highest efficiency for (3S)-hydroxybutanoyl-CoA. Acts as 3-hydroxy-2-methylbutyryl-CoA dehydrogenase in branched-chain amino acid catabolic pathway. Catalyzes the oxidation of 3-hydroxy-2-methylbutanoyl-CoA into 2-methyl-3-oxobutanoyl-CoA, a step in isoleucine degradation pathway. Has hydroxysteroid dehydrogenase activity toward steroid hormones and bile acids. Catalyzes the oxidation of 3alpha-, 17beta-, 20beta- and 21-hydroxysteroids and 7alpha- and 7beta-hydroxy bile acids. Oxidizes allopregnanolone/brexanolone at the 3alpha-hydroxyl group, which is known to be critical for the activation of gamma-aminobutyric acid receptors (GABAARs) chloride channel. Has phospholipase C-like activity toward cardiolipin and its oxidized species. Likely oxidizes the 2'-hydroxyl in the head group of cardiolipin to form a ketone intermediate that undergoes nucleophilic attack by water and fragments into diacylglycerol, dihydroxyacetone and orthophosphate. Has higher affinity for cardiolipin with oxidized fatty acids and may degrade these species during the oxidative stress response to protect cells from apoptosis. By interacting with intracellular amyloid-beta, it may contribute to the neuronal dysfunction associated with Alzheimer disease (AD). Essential for structural and functional integrity of mitochondria. In addition to mitochondrial dehydrogenase activity, moonlights as a component of mitochondrial ribonuclease P, a complex that cleaves tRNA molecules in their 5'-ends. Together with TRMT10C/MRPP1, forms a subcomplex of the mitochondrial ribonuclease P, named MRPP1-MRPP2 subcomplex, which displays functions that are independent of the ribonuclease P activity. The MRPP1-MRPP2 subcomplex catalyzes the formation of N(1)-methylguanine and N(1)-methyladenine at position 9 (m1G9 and m1A9, respectively) in tRNAs; HSD17B10/MRPP2 acting as a non-catalytic subunit. The MRPP1-MRPP2 subcomplex also acts as a tRNA maturation platform: following 5'-end cleavage by the mitochondrial ribonuclease P complex, the MRPP1-MRPP2 subcomplex enhances the efficiency of 3'-processing catalyzed by ELAC2, retains the tRNA product after ELAC2 processing and presents the nascent tRNA to the mitochondrial CCA tRNA nucleotidyltransferase TRNT1 enzyme. Associates with mitochondrial DNA complexes at the nucleoids to initiate RNA processing and ribosome assembly. In Mus musculus (Mouse), this protein is 3-hydroxyacyl-CoA dehydrogenase type-2 (Hsd17b10).